The primary structure comprises 158 residues: SsrA-binding protein (158 aa).

Residues 133–148 (KAQDKRETSAKRDWNR) show a composition bias toward basic and acidic residues. Residues 133–158 (KAQDKRETSAKRDWNRQKARLLKQNG) are disordered. Positions 149–158 (QKARLLKQNG) are enriched in basic residues.

Belongs to the SmpB family.

It is found in the cytoplasm. In terms of biological role, required for rescue of stalled ribosomes mediated by trans-translation. Binds to transfer-messenger RNA (tmRNA), required for stable association of tmRNA with ribosomes. tmRNA and SmpB together mimic tRNA shape, replacing the anticodon stem-loop with SmpB. tmRNA is encoded by the ssrA gene; the 2 termini fold to resemble tRNA(Ala) and it encodes a 'tag peptide', a short internal open reading frame. During trans-translation Ala-aminoacylated tmRNA acts like a tRNA, entering the A-site of stalled ribosomes, displacing the stalled mRNA. The ribosome then switches to translate the ORF on the tmRNA; the nascent peptide is terminated with the 'tag peptide' encoded by the tmRNA and targeted for degradation. The ribosome is freed to recommence translation, which seems to be the essential function of trans-translation. This is SsrA-binding protein from Jannaschia sp. (strain CCS1).